The chain runs to 161 residues: Small ribosomal subunit protein uS9 (161 aa).

It belongs to the universal ribosomal protein uS9 family.

In Bartonella bacilliformis (strain ATCC 35685 / KC583 / Herrer 020/F12,63), this protein is Small ribosomal subunit protein uS9.